A 128-amino-acid polypeptide reads, in one-letter code: UPF0212 protein TGAM_1344 (128 aa).

This sequence belongs to the UPF0212 family.

This chain is UPF0212 protein TGAM_1344, found in Thermococcus gammatolerans (strain DSM 15229 / JCM 11827 / EJ3).